We begin with the raw amino-acid sequence, 828 residues long: Class I hydrophobin hum3 (828 aa).

A signal peptide spans 1–22 (MKYLQFLAAVAAVSAFSGPVLA). 3 N-linked (GlcNAc...) asparagine glycosylation sites follow: asparagine 156, asparagine 222, and asparagine 738. 4 disulfide bridges follow: cysteine 750–cysteine 808, cysteine 757–cysteine 802, cysteine 758–cysteine 788, and cysteine 809–cysteine 822. An N-linked (GlcNAc...) asparagine glycan is attached at asparagine 811.

It in the C-terminal section; belongs to the fungal hydrophobin family. In terms of assembly, self-assembles to form functional amyloid fibrils called rodlets. Self-assembly into fibrillar rodlets occurs spontaneously at hydrophobic:hydrophilic interfaces and the rodlets further associate laterally to form amphipathic monolayers. Post-translationally, hum3 is an atypical hydrophobin that consists in a repetitive repellent-like region that spans 578 aa which is separated from a hydrophobin-like domain by a spacer region containing three possible kex2 processing sites. The repetitive region contains 17 amphipathic repeats of 31-36 aa each of them with a C-terminal putative kex2 processing motif.

The protein localises to the secreted. It is found in the cell wall. Aerial growth, conidiation, and dispersal of filamentous fungi in the environment rely upon a capability of their secreting small amphipathic proteins called hydrophobins (HPBs) with low sequence identity. Class I can self-assemble into an outermost layer of rodlet bundles on aerial cell surfaces, conferring cellular hydrophobicity that supports fungal growth, development and dispersal; whereas Class II form highly ordered films at water-air interfaces through intermolecular interactions but contribute nothing to the rodlet structure. Atypical class I hydrophobin that is preceded by a signal sequence and 17 imperfect repeats. The repeated peptides might function as repellents whereas the class I hydrophobin seems not to be crucial for the formation of aerial hyphae. Hydrophobins of Mycosarcoma maydis have been functionally replaced, at least partially, by repellents. Hum3 and rsp1 together are pathogenicity proteins that share an essential function in early stages of the infection. The chain is Class I hydrophobin hum3 from Mycosarcoma maydis (Corn smut fungus).